The following is a 200-amino-acid chain: MKIGIIAYQGSFEEHYLQLKRAFDKWSINGEITPVKIPKDLKDIDGVIIPGGESTTIGLVAKRLGILDELKEKITSGLPVMGTCAGAIMLAKEVSDAKVGKTSQPLIGAMNISIIRNYYGRQRESFEAIIDLSKIGKGKANVVFIRAPAITKLWGKAQSLAELNGVTVLAEENNILATTFHPELSDTTSIHEYFLHLVKG.

52–54 (GES) contributes to the L-glutamine binding site. The Nucleophile role is filled by cysteine 84. L-glutamine is bound by residues arginine 116 and 145–146 (IR). Active-site charge relay system residues include histidine 181 and glutamate 183.

This sequence belongs to the glutaminase PdxT/SNO family. As to quaternary structure, in the presence of PdxS, forms a dodecamer of heterodimers. Only shows activity in the heterodimer.

The enzyme catalyses aldehydo-D-ribose 5-phosphate + D-glyceraldehyde 3-phosphate + L-glutamine = pyridoxal 5'-phosphate + L-glutamate + phosphate + 3 H2O + H(+). The catalysed reaction is L-glutamine + H2O = L-glutamate + NH4(+). The protein operates within cofactor biosynthesis; pyridoxal 5'-phosphate biosynthesis. Catalyzes the hydrolysis of glutamine to glutamate and ammonia as part of the biosynthesis of pyridoxal 5'-phosphate. The resulting ammonia molecule is channeled to the active site of PdxS. The protein is Pyridoxal 5'-phosphate synthase subunit PdxT of Saccharolobus islandicus (strain Y.G.57.14 / Yellowstone #1) (Sulfolobus islandicus).